The sequence spans 465 residues: Ribulose bisphosphate carboxylase large chain (465 aa).

Lys-4 carries the post-translational modification N6,N6,N6-trimethyllysine. Substrate contacts are provided by Asn-113 and Thr-163. The Proton acceptor role is filled by Lys-165. Residue Lys-167 coordinates substrate. Lys-191, Asp-193, and Glu-194 together coordinate Mg(2+). The residue at position 191 (Lys-191) is an N6-carboxylysine. His-284 (proton acceptor) is an active-site residue. Residues Arg-285, His-317, and Ser-369 each contribute to the substrate site.

This sequence belongs to the RuBisCO large chain family. Type I subfamily. As to quaternary structure, heterohexadecamer of 8 large chains and 8 small chains; disulfide-linked. The disulfide link is formed within the large subunit homodimers. Mg(2+) serves as cofactor. Post-translationally, the disulfide bond which can form in the large chain dimeric partners within the hexadecamer appears to be associated with oxidative stress and protein turnover.

The protein resides in the plastid. The protein localises to the chloroplast. The enzyme catalyses 2 (2R)-3-phosphoglycerate + 2 H(+) = D-ribulose 1,5-bisphosphate + CO2 + H2O. The catalysed reaction is D-ribulose 1,5-bisphosphate + O2 = 2-phosphoglycolate + (2R)-3-phosphoglycerate + 2 H(+). In terms of biological role, ruBisCO catalyzes two reactions: the carboxylation of D-ribulose 1,5-bisphosphate, the primary event in carbon dioxide fixation, as well as the oxidative fragmentation of the pentose substrate in the photorespiration process. Both reactions occur simultaneously and in competition at the same active site. This chain is Ribulose bisphosphate carboxylase large chain, found in Cornus oblonga.